We begin with the raw amino-acid sequence, 153 residues long: D-aminoacyl-tRNA deacylase (153 aa).

Positions 142–143 (GP) match the Gly-cisPro motif, important for rejection of L-amino acids motif.

It belongs to the DTD family. Homodimer.

Its subcellular location is the cytoplasm. The enzyme catalyses glycyl-tRNA(Ala) + H2O = tRNA(Ala) + glycine + H(+). The catalysed reaction is a D-aminoacyl-tRNA + H2O = a tRNA + a D-alpha-amino acid + H(+). An aminoacyl-tRNA editing enzyme that deacylates mischarged D-aminoacyl-tRNAs. Also deacylates mischarged glycyl-tRNA(Ala), protecting cells against glycine mischarging by AlaRS. Acts via tRNA-based rather than protein-based catalysis; rejects L-amino acids rather than detecting D-amino acids in the active site. By recycling D-aminoacyl-tRNA to D-amino acids and free tRNA molecules, this enzyme counteracts the toxicity associated with the formation of D-aminoacyl-tRNA entities in vivo and helps enforce protein L-homochirality. This chain is D-aminoacyl-tRNA deacylase, found in Acidovorax ebreus (strain TPSY) (Diaphorobacter sp. (strain TPSY)).